A 314-amino-acid polypeptide reads, in one-letter code: Acetyl-coenzyme A carboxylase carboxyl transferase subunit beta, chloroplastic (314 aa).

Residues 47–314 (LWTRCDNCEN…APWKEKNNQV (268 aa)) enclose the CoA carboxyltransferase N-terminal domain. The Zn(2+) site is built by C51, C54, C70, and C73. The C4-type zinc-finger motif lies at 51 to 73 (CDNCENMLYIKFLKQNKGVCEEC).

The protein belongs to the AccD/PCCB family. In terms of assembly, acetyl-CoA carboxylase is a heterohexamer composed of biotin carboxyl carrier protein, biotin carboxylase and 2 subunits each of ACCase subunit alpha and ACCase plastid-coded subunit beta (accD). Zn(2+) serves as cofactor.

Its subcellular location is the plastid. It localises to the chloroplast stroma. It carries out the reaction N(6)-carboxybiotinyl-L-lysyl-[protein] + acetyl-CoA = N(6)-biotinyl-L-lysyl-[protein] + malonyl-CoA. It functions in the pathway lipid metabolism; malonyl-CoA biosynthesis; malonyl-CoA from acetyl-CoA: step 1/1. Functionally, component of the acetyl coenzyme A carboxylase (ACC) complex. Biotin carboxylase (BC) catalyzes the carboxylation of biotin on its carrier protein (BCCP) and then the CO(2) group is transferred by the transcarboxylase to acetyl-CoA to form malonyl-CoA. This chain is Acetyl-coenzyme A carboxylase carboxyl transferase subunit beta, chloroplastic, found in Angiopteris lygodiifolia (Turnip fern).